We begin with the raw amino-acid sequence, 298 residues long: ADP/ATP translocase 1 (298 aa).

Residues 1–7 lie on the Mitochondrial intermembrane side of the membrane; the sequence is MGDHAWS. Gly2 carries the post-translational modification N-acetylglycine. The stretch at 6–98 is one Solcar 1 repeat; that stretch reads WSFLKDFLAG…FAFKDKYKQL (93 aa). Ser7 is modified (phosphoserine). The chain crosses the membrane as a helical span at residues 8-37; it reads FLKDFLAGGVAAAVSKTAVAPIERVKLLLQ. Residues 38-74 lie on the Mitochondrial matrix side of the membrane; that stretch reads VQHASKQISAEKQYKGIIDCVVRIPKEQGFLSFWRGN. At Lys52 the chain carries N6,N6,N6-trimethyllysine. Residues 75–99 traverse the membrane as a helical segment; sequence LANVIRYFPTQALNFAFKDKYKQLF. 2 residues coordinate ADP: Arg80 and Lys92. Residues 100 to 109 lie on the Mitochondrial intermembrane side of the membrane; the sequence is LGGVDRHKQF. A helical membrane pass occupies residues 110 to 130; the sequence is WRYFAGNLASGGAAGATSLCF. Solcar repeat units follow at residues 111-201 and 212-297; these read RYFA…AKGM and VSWM…IKKY. Over 131-178 the chain is Mitochondrial matrix; it reads VYPLDFARTRLAADVGKGAAQREFHGLGDCIIKIFKSDGLRGLYQGFN. The residue at position 147 (Lys147) is an N6-succinyllysine. Cys160 carries the S-nitrosocysteine modification. Residues 179–199 form a helical membrane-spanning segment; it reads VSVQGIIIYRAAYFGVYDTAK. The Mitochondrial intermembrane portion of the chain corresponds to 200-210; the sequence is GMLPDPKNVHI. Residues 211–231 form a helical membrane-spanning segment; it reads FVSWMIAQSVTAVAGLVSYPF. Residues 232-273 lie on the Mitochondrial matrix side of the membrane; that stretch reads DTVRRRMMMQSGRKGADIMYTGTVDCWRKIAKDEGAKAFFKG. Residue Arg235 coordinates ADP. Residues 235 to 240 form an important for transport activity region; sequence RRRMMM. A Nucleotide carrier signature motif motif is present at residues 235 to 240; sequence RRRMMM. An N6-succinyllysine mark is found at Lys245 and Lys272. A helical membrane pass occupies residues 274–291; it reads AWSNVLRGMGGAFVLVLY. At 292–298 the chain is on the mitochondrial intermembrane side; it reads DEIKKYV.

This sequence belongs to the mitochondrial carrier (TC 2.A.29) family. Monomer. Found in a complex with ARL2, ARL2BP and SLC25A4/ANT1. Interacts with ARL2BP. Interacts with ARHGAP11B, thereby inhibiting the mitochondrial permeability transition pore (mPTP). Interacts with TIMM44; leading to inhibit the presequence translocase TIMM23, thereby promoting stabilization of PINK1. As to quaternary structure, (Microbial infection) Interacts with HIV-1 Vpr. Under cell death induction, transglutaminated by TGM2. Transglutamination leads to formation of covalent cross-links between a glutamine and the epsilon-amino group of a lysine residue, forming polymers. Expressed in erythrocytes (at protein level).

Its subcellular location is the mitochondrion inner membrane. It is found in the membrane. The enzyme catalyses ADP(in) + ATP(out) = ADP(out) + ATP(in). It carries out the reaction H(+)(in) = H(+)(out). With respect to regulation, the matrix-open state (m-state) is inhibited by the membrane-permeable bongkrekic acid (BKA). The cytoplasmic-open state (c-state) is inhibited by the membrane-impermeable toxic inhibitor carboxyatractyloside (CATR). Proton transporter activity is inhibited by ADP:ATP antiporter activity. Functionally, ADP:ATP antiporter that mediates import of ADP into the mitochondrial matrix for ATP synthesis, and export of ATP out to fuel the cell. Cycles between the cytoplasmic-open state (c-state) and the matrix-open state (m-state): operates by the alternating access mechanism with a single substrate-binding site intermittently exposed to either the cytosolic (c-state) or matrix (m-state) side of the inner mitochondrial membrane. In addition to its ADP:ATP antiporter activity, also involved in mitochondrial uncoupling and mitochondrial permeability transition pore (mPTP) activity. Plays a role in mitochondrial uncoupling by acting as a proton transporter: proton transport uncouples the proton flows via the electron transport chain and ATP synthase to reduce the efficiency of ATP production and cause mitochondrial thermogenesis. Proton transporter activity is inhibited by ADP:ATP antiporter activity, suggesting that SLC25A4/ANT1 acts as a master regulator of mitochondrial energy output by maintaining a delicate balance between ATP production (ADP:ATP antiporter activity) and thermogenesis (proton transporter activity). Proton transporter activity requires free fatty acids as cofactor, but does not transport it. Also plays a key role in mPTP opening, a non-specific pore that enables free passage of the mitochondrial membranes to solutes of up to 1.5 kDa, and which contributes to cell death. It is however unclear if SLC25A4/ANT1 constitutes a pore-forming component of mPTP or regulates it. Acts as a regulator of mitophagy independently of ADP:ATP antiporter activity: promotes mitophagy via interaction with TIMM44, leading to inhibit the presequence translocase TIMM23, thereby promoting stabilization of PINK1. In Homo sapiens (Human), this protein is ADP/ATP translocase 1.